Consider the following 58-residue polypeptide: UPF0391 membrane protein COXBURSA331_A2131 (58 aa).

Helical transmembrane passes span 3 to 23 and 30 to 50; these read FWVL…FTGI and IAKI…IAML.

It belongs to the UPF0391 family.

The protein localises to the cell membrane. This chain is UPF0391 membrane protein COXBURSA331_A2131, found in Coxiella burnetii (strain RSA 331 / Henzerling II).